Here is a 260-residue protein sequence, read N- to C-terminus: Meiotic recombination protein rec6 (260 aa).

The tract at residues 197 to 222 (QYSESSLLDDSQLLCSSPPVDSTEEA) is disordered. The segment covering 199–213 (SESSLLDDSQLLCSS) has biased composition (low complexity).

The protein belongs to the TOP6B-like family. As to quaternary structure, component of the DSB catalytic core (DSBC) complex, composed of at least rec12, rec6 and rec14. The complex interacts with mde2.

Functionally, required for formation of the rec12-mediated double-strand breaks (DSBs) that initiate meiotic recombination. May be involved primarily in the early steps of meiotic recombination. In Schizosaccharomyces pombe (strain 972 / ATCC 24843) (Fission yeast), this protein is Meiotic recombination protein rec6.